The sequence spans 104 residues: UPF0213 protein ORF82 (104 aa).

A GIY-YIG domain is found at 7–83 (KVWCVYIVRR…KRKRGKYFKL (77 aa)).

This sequence belongs to the UPF0213 family.

The polypeptide is UPF0213 protein ORF82 (Orgyia pseudotsugata (Douglas-fir tussock moth)).